We begin with the raw amino-acid sequence, 1055 residues long: Elongation factor 3 (1055 aa).

Valine 45 contacts ADP. HEAT repeat units follow at residues 45 to 86 (VEFF…NGAA), 96 to 133 (SAEN…SMNP), 135 to 172 (ASFV…SAPY), 175 to 213 (GEAM…LVEN), 217 to 255 (EKFV…APTI), 257 to 290 (LIAP…LVDS), and 295 to 337 (RPFL…VPVE). ABC transporter domains are found at residues 447–659 (CNIE…SYYQ) and 687–1004 (LKMR…KKAG). ADP is bound by residues asparagine 723, glutamate 933, asparagine 936, and histidine 962. Disordered stretches follow at residues 987 to 1006 (HNWV…AGDD) and 1024 to 1055 (EKKL…DEEL). Residues 1033–1044 (RKAKKDRMARRK) show a composition bias toward basic residues.

It belongs to the ABC transporter superfamily. ABCF family. EF3 subfamily. As to quaternary structure, associates with ribosomes.

The protein localises to the cytoplasm. It is found in the cytosol. The enzyme catalyses ATP + H2O = ADP + phosphate + H(+). Its pathway is protein biosynthesis; polypeptide chain elongation. Its function is as follows. Ribosome-dependent ATPase that functions in cytoplasmic translation elongation. Required for the ATP-dependent release of deacylated tRNA from the ribosomal E-site during protein biosynthesis. Stimulates the eEF1A-dependent binding of aminoacyl-tRNA to the ribosomal A-site, which has reduced affinity for tRNA as long as the E-site is occupied. Assists translation termination by stimulating the release of nascent protein from the ribosome by release factors. Appears to target calcium-channel protein CCH1 to the plasma membrane. The chain is Elongation factor 3 from Cryptococcus neoformans var. neoformans serotype D (strain JEC21 / ATCC MYA-565) (Filobasidiella neoformans).